Consider the following 168-residue polypeptide: Photosystem I assembly protein Ycf3 (168 aa).

TPR repeat units follow at residues Ala-35–Pro-68, Ser-72–Leu-105, and Gly-120–Asn-153.

Belongs to the Ycf3 family.

It localises to the plastid. Its subcellular location is the chloroplast thylakoid membrane. Essential for the assembly of the photosystem I (PSI) complex. May act as a chaperone-like factor to guide the assembly of the PSI subunits. In Daucus carota (Wild carrot), this protein is Photosystem I assembly protein Ycf3.